Reading from the N-terminus, the 724-residue chain is MPSELFDLDNARAARDTFLDARRTATLLHKFLDSHRELKSYKNGRTINVDGHTLSLAAVTAAARYNANVELSQSAQVKEGVEKSRAVIAEKVEQGTSVYGVSTGFGGSADTRTDQPLKLQQALLQHQHAGVLPSSSKTLGVLPLMDPMAATSMPEAWVRGAMLIRMNSLIRGHSGVRWELIEKINDLLRANITPVVPLRSSISASGDLSPLSYVAGTLTANPSIRVFDGPSAFGARKMVSSRDALAAHKIKPVTLASKEGLGILNGTAFSAAVASLALTEATHLALLAQVCTALGTEALCGTTGSYAPFIHVTARPHPGQIEAANNMWNLLQGSKLASGHEEEVSINQDKYELRQDRYPLRTSPQFLGPQIEDILAALASVTQECNSTTDNPLVDGNTGEVHHGGNFQAMAISNAMEKTRLAVHHIGKLMFSQSTELVNPAMNHGLPPSLAASDPSLNYHGKGVDIATAAYVSELGYLANPVTTHIQSAEMHNQAVNSLALISARATVTSLDVLTILMSSYLYLLCQAVDLRALRRDLDVGVRAIIAEEVSKLFSNNLSSEEMDLLHSSLYSKYQHTMDKTTTMDAVDQMKEVTASFAPMLVEVFTSTRVMPDALSAIPRFRSNISSRATQLFDRLRASYLSGERGATPASSLLGRTRSVYEFIRVSLGIRMHGSENYSAFANGLGVDDPTIGQNISSIYEAIRDGKFHDVVADLFEALPRSKL.

Tyr99 (proton donor/acceptor) is an active-site residue. The segment at residues 204-206 (ASG) is a cross-link (5-imidazolinone (Ala-Gly)). Ser205 carries the post-translational modification 2,3-didehydroalanine (Ser). Positions 265, 355, 361, 391, 462, 490, and 493 each coordinate (E)-cinnamate.

The protein belongs to the PAL/histidase family. Homotetramer. In terms of processing, contains an active site 4-methylidene-imidazol-5-one (MIO), which is formed autocatalytically by cyclization and dehydration of residues Ala-Ser-Gly.

The protein localises to the cytoplasm. The enzyme catalyses L-phenylalanine = (E)-cinnamate + NH4(+). The protein operates within phenylpropanoid metabolism; trans-cinnamate biosynthesis; trans-cinnamate from L-phenylalanine: step 1/1. In terms of biological role, catalyzes the non-oxidative deamination of L-phenylalanine to form trans-cinnamic acid and a free ammonium ion. Facilitates the commitment step in phenylpropanoid pathways that produce secondary metabolites such as lignins, coumarins and flavonoids. This chain is Phenylalanine ammonia-lyase, found in Flammulina velutipes (Agaricus velutipes).